A 409-amino-acid polypeptide reads, in one-letter code: N-acetylglucosamine-6-phosphate deacetylase (409 aa).

Glu-143 lines the a divalent metal cation pocket. Position 154–155 (154–155 (AH)) interacts with substrate. His-211 and His-232 together coordinate a divalent metal cation. Residues 235 to 236 (NA), Arg-243, and 269 to 272 (DGIH) each bind substrate. Asp-294 (proton donor/acceptor) is an active-site residue. 328–330 (LSG) contacts substrate.

Belongs to the metallo-dependent hydrolases superfamily. NagA family. A divalent metal cation is required as a cofactor.

The enzyme catalyses N-acetyl-D-glucosamine 6-phosphate + H2O = D-glucosamine 6-phosphate + acetate. It functions in the pathway amino-sugar metabolism; N-acetylneuraminate degradation. In terms of biological role, hydrolyzes the N-glycolyl group from N-glycolylglucosamine 6-phosphate (GlcNGc-6-P) in the N-glycolylneuraminic acid (Neu5Gc) degradation pathway. The sequence is that of N-acetylglucosamine-6-phosphate deacetylase (AMDHD2) from Bos taurus (Bovine).